The sequence spans 83 residues: Cell division topological specificity factor (83 aa).

It belongs to the MinE family.

Prevents the cell division inhibition by proteins MinC and MinD at internal division sites while permitting inhibition at polar sites. This ensures cell division at the proper site by restricting the formation of a division septum at the midpoint of the long axis of the cell. This Buchnera aphidicola subsp. Baizongia pistaciae (strain Bp) protein is Cell division topological specificity factor.